Consider the following 340-residue polypeptide: Glutaminase 2 (340 aa).

Residues S89, N140, N191, Y215, and Y267 each coordinate substrate.

This sequence belongs to the glutaminase family. Homotetramer.

The catalysed reaction is L-glutamine + H2O = L-glutamate + NH4(+). In Yersinia pestis, this protein is Glutaminase 2.